We begin with the raw amino-acid sequence, 119 residues long: UPF0102 protein FP2501 (119 aa).

Belongs to the UPF0102 family.

The polypeptide is UPF0102 protein FP2501 (Flavobacterium psychrophilum (strain ATCC 49511 / DSM 21280 / CIP 103535 / JIP02/86)).